A 436-amino-acid polypeptide reads, in one-letter code: Adenylosuccinate synthetase (436 aa).

GTP-binding positions include 13–19 and 41–43; these read GDEGKGK and GHT. The active-site Proton acceptor is Asp14. Positions 14 and 41 each coordinate Mg(2+). IMP is bound by residues 14–17, 39–42, Thr130, Arg144, Gln225, Thr240, and Arg304; these read DEGK and NAGH. The active-site Proton donor is the His42. 300–306 provides a ligand contact to substrate; the sequence is ATTGRSR. GTP-binding positions include Arg306, 332–334, and 415–417; these read KLD and STG.

This sequence belongs to the adenylosuccinate synthetase family. In terms of assembly, homodimer. It depends on Mg(2+) as a cofactor.

It localises to the cytoplasm. It carries out the reaction IMP + L-aspartate + GTP = N(6)-(1,2-dicarboxyethyl)-AMP + GDP + phosphate + 2 H(+). It functions in the pathway purine metabolism; AMP biosynthesis via de novo pathway; AMP from IMP: step 1/2. In terms of biological role, plays an important role in the de novo pathway of purine nucleotide biosynthesis. Catalyzes the first committed step in the biosynthesis of AMP from IMP. The polypeptide is Adenylosuccinate synthetase (Hamiltonella defensa subsp. Acyrthosiphon pisum (strain 5AT)).